Here is a 494-residue protein sequence, read N- to C-terminus: O-acetyltransferase ptmV (494 aa).

The segment at 181–203 is disordered; that stretch reads ESQQDSREKLRHSGGPPDPRFDH.

The protein belongs to the fumigaclavine B O-acetyltransferase family. As to quaternary structure, monomer.

The protein operates within secondary metabolite biosynthesis. In terms of biological role, O-acetyltransferase; part of the gene cluster that mediates the biosynthesis of the indole diterpenes penitrems. The geranylgeranyl diphosphate (GGPP) synthase ptmG catalyzes the first step in penitrem biosynthesis via conversion of farnesyl pyrophosphate and isopentyl pyrophosphate into geranylgeranyl pyrophosphate (GGPP). Condensation of indole-3-glycerol phosphate with GGPP by the prenyl transferase ptmC then forms 3-geranylgeranylindole (3-GGI). Epoxidation by the FAD-dependent monooxygenase ptmM leads to a epoxidized-GGI that is substrate of the terpene cyclase ptmB for cyclization to yield paspaline. Paspaline is subsequently converted to 13-desoxypaxilline by the cytochrome P450 monooxygenase ptmP, the latter being then converted to paxilline by the cytochrome P450 monooxygenase ptmQ. Paxilline is converted to beta-paxitriol via C-10 ketoreduction by the short-chain dehydrogenase ptmH which can be monoprenylated at the C-20 by the indole diterpene prenyltransferase ptmD. A two-step elimination (acetylation and elimination) process performed by the O-acetyltransferase ptmV and ptmI leads to the production of the prenylated form of penijanthine. The FAD-linked oxidoreductase ptmO then converts the prenylated form of penijanthine into PC-M5 which is in turn transformed into PC-M4 by the aromatic dimethylallyltransferase ptmE. Five sequential oxidative transformations performed by the cytochrome P450 monooxygenases ptmK, ptmU, ptmL, ptmN and ptmJ yield the various penitrem compounds. PtmK, ptmU and ptmM are involved in the formation of the key bicyclic ring of penitrem C via the formation of the intermediates secopenitrem D and penitrem D. PtmL catalyzes the epoxidation of penitrem D and C to yield penitrem B and F, respectively. PtmJ catalyzes the last benzylic hydroxylation to convert penitrem B to prenitrem E and penitrem F to penitrem A. The sequence is that of O-acetyltransferase ptmV from Penicillium ochrochloron.